Consider the following 488-residue polypeptide: PPE family protein PPE10 (488 aa).

Disordered regions lie at residues 207 to 232 (NNNW…NIGS) and 443 to 488 (SDAG…LRTE).

Belongs to the mycobacterial PPE family.

It localises to the secreted. Its function is as follows. Plays a major role in the integrity and stability of the capsule. The sequence is that of PPE family protein PPE10 from Mycobacterium marinum (strain ATCC BAA-535 / M).